Consider the following 234-residue polypeptide: 3-dehydroquinate dehydratase (234 aa).

3-dehydroquinate-binding positions include 33-35 and R68; that span reads EWR. H124 functions as the Proton donor/acceptor in the catalytic mechanism. K151 functions as the Schiff-base intermediate with substrate in the catalytic mechanism. Residues R193, S214, and Q218 each coordinate 3-dehydroquinate.

Belongs to the type-I 3-dehydroquinase family. Homodimer.

The enzyme catalyses 3-dehydroquinate = 3-dehydroshikimate + H2O. The protein operates within metabolic intermediate biosynthesis; chorismate biosynthesis; chorismate from D-erythrose 4-phosphate and phosphoenolpyruvate: step 3/7. Involved in the third step of the chorismate pathway, which leads to the biosynthesis of aromatic amino acids. Catalyzes the cis-dehydration of 3-dehydroquinate (DHQ) and introduces the first double bond of the aromatic ring to yield 3-dehydroshikimate. This is 3-dehydroquinate dehydratase from Syntrophobacter fumaroxidans (strain DSM 10017 / MPOB).